Here is a 394-residue protein sequence, read N- to C-terminus: Phosphoglycerate kinase (394 aa).

Residues 21–23, R36, 59–62, R118, and R151 contribute to the substrate site; these read DFN and HLGR. S183 carries the post-translational modification Phosphoserine. K201 contacts ATP. T299 is subject to Phosphothreonine. ATP is bound by residues E323 and 350 to 353; that span reads GGDS.

The protein belongs to the phosphoglycerate kinase family. Monomer.

The protein resides in the cytoplasm. It carries out the reaction (2R)-3-phosphoglycerate + ATP = (2R)-3-phospho-glyceroyl phosphate + ADP. The protein operates within carbohydrate degradation; glycolysis; pyruvate from D-glyceraldehyde 3-phosphate: step 2/5. This Shouchella clausii (strain KSM-K16) (Alkalihalobacillus clausii) protein is Phosphoglycerate kinase.